The chain runs to 443 residues: Xaa-Pro dipeptidase (443 aa).

Positions 246, 257, 339, 384, and 423 each coordinate Mn(2+).

This sequence belongs to the peptidase M24B family. Bacterial-type prolidase subfamily. Mn(2+) serves as cofactor.

The catalysed reaction is Xaa-L-Pro dipeptide + H2O = an L-alpha-amino acid + L-proline. Its function is as follows. Splits dipeptides with a prolyl residue in the C-terminal position. The chain is Xaa-Pro dipeptidase from Escherichia coli O81 (strain ED1a).